The primary structure comprises 354 residues: 3-isopropylmalate dehydrogenase (354 aa).

Substrate contacts are provided by Arg96, Arg106, Arg132, and Asp223. Positions 223, 247, and 251 each coordinate Mg(2+). 283–295 (GSAPDIAGQGKAD) is a binding site for NAD(+).

It belongs to the isocitrate and isopropylmalate dehydrogenases family. LeuB type 2 subfamily. As to quaternary structure, homodimer. It depends on Mg(2+) as a cofactor. The cofactor is Mn(2+).

The protein localises to the cytoplasm. It catalyses the reaction (2R,3S)-3-isopropylmalate + NAD(+) = 4-methyl-2-oxopentanoate + CO2 + NADH. It functions in the pathway amino-acid biosynthesis; L-leucine biosynthesis; L-leucine from 3-methyl-2-oxobutanoate: step 3/4. Its function is as follows. Catalyzes the oxidation of 3-carboxy-2-hydroxy-4-methylpentanoate (3-isopropylmalate) to 3-carboxy-4-methyl-2-oxopentanoate. The product decarboxylates to 4-methyl-2 oxopentanoate. The protein is 3-isopropylmalate dehydrogenase of Thermobifida fusca (strain YX).